Consider the following 852-residue polypeptide: DNA mismatch repair protein MutS (852 aa).

Position 602-609 (602-609) interacts with ATP; it reads GPNMSGKS.

The protein belongs to the DNA mismatch repair MutS family.

Functionally, this protein is involved in the repair of mismatches in DNA. It is possible that it carries out the mismatch recognition step. This protein has a weak ATPase activity. This Streptococcus thermophilus (strain CNRZ 1066) protein is DNA mismatch repair protein MutS.